An 86-amino-acid chain; its full sequence is Exodeoxyribonuclease 7 small subunit (86 aa).

A disordered region spans residues 1-26 (MQDELFETEKAPQKNTKNAKNAPKKS).

It belongs to the XseB family. As to quaternary structure, heterooligomer composed of large and small subunits.

The protein localises to the cytoplasm. It carries out the reaction Exonucleolytic cleavage in either 5'- to 3'- or 3'- to 5'-direction to yield nucleoside 5'-phosphates.. Bidirectionally degrades single-stranded DNA into large acid-insoluble oligonucleotides, which are then degraded further into small acid-soluble oligonucleotides. This Helicobacter pylori (strain HPAG1) protein is Exodeoxyribonuclease 7 small subunit.